The primary structure comprises 257 residues: NAD-capped RNA hydrolase NudC (257 aa).

Substrate is bound by residues K25 and R69. Residues C98 and C101 each contribute to the Zn(2+) site. E111 provides a ligand contact to substrate. The Zn(2+) site is built by C116 and C119. Substrate is bound at residue Y124. The 124-residue stretch at 125-248 (PQIAPCIIVA…TVARRLIEDT (124 aa)) folds into the Nudix hydrolase domain. Residues A158, E174, and E178 each contribute to the a divalent metal cation site. The short motif at 159 to 180 (GFVEVGETLEQAVAREVMEESG) is the Nudix box element. 192–199 (QPWPFPQS) lines the substrate pocket. E219 contacts a divalent metal cation. Residue A241 coordinates substrate.

The protein belongs to the Nudix hydrolase family. NudC subfamily. As to quaternary structure, homodimer. The cofactor is Mg(2+). It depends on Mn(2+) as a cofactor. Requires Zn(2+) as cofactor.

The enzyme catalyses a 5'-end NAD(+)-phospho-ribonucleoside in mRNA + H2O = a 5'-end phospho-adenosine-phospho-ribonucleoside in mRNA + beta-nicotinamide D-ribonucleotide + 2 H(+). It carries out the reaction NAD(+) + H2O = beta-nicotinamide D-ribonucleotide + AMP + 2 H(+). The catalysed reaction is NADH + H2O = reduced beta-nicotinamide D-ribonucleotide + AMP + 2 H(+). Functionally, mRNA decapping enzyme that specifically removes the nicotinamide adenine dinucleotide (NAD) cap from a subset of mRNAs by hydrolyzing the diphosphate linkage to produce nicotinamide mononucleotide (NMN) and 5' monophosphate mRNA. The NAD-cap is present at the 5'-end of some mRNAs and stabilizes RNA against 5'-processing. Has preference for mRNAs with a 5'-end purine. Catalyzes the hydrolysis of a broad range of dinucleotide pyrophosphates. This is NAD-capped RNA hydrolase NudC from Escherichia coli O127:H6 (strain E2348/69 / EPEC).